The sequence spans 134 residues: Arsenate reductase (134 aa).

Catalysis depends on nucleophile residues Cys-11, Cys-83, and Cys-90. 2 disulfide bridges follow: Cys-11–Cys-83 and Cys-83–Cys-90.

The protein belongs to the low molecular weight phosphotyrosine protein phosphatase family. Thioredoxin-coupled ArsC subfamily.

It localises to the cytoplasm. The catalysed reaction is arsenate + [thioredoxin]-dithiol + H(+) = arsenite + [thioredoxin]-disulfide + H2O. In terms of biological role, catalyzes the reduction of arsenate [As(V)] to arsenite [As(III)]. This is Arsenate reductase from Brevibacillus brevis (strain 47 / JCM 6285 / NBRC 100599).